The primary structure comprises 788 residues: Phenylalanine--tRNA ligase beta subunit (788 aa).

Residues F39–V147 enclose the tRNA-binding domain. A B5 domain is found at I399–S472. Residues D450, D456, E459, and E460 each coordinate Mg(2+). Positions P694–R787 constitute an FDX-ACB domain.

It belongs to the phenylalanyl-tRNA synthetase beta subunit family. Type 1 subfamily. Tetramer of two alpha and two beta subunits. Requires Mg(2+) as cofactor.

It is found in the cytoplasm. The catalysed reaction is tRNA(Phe) + L-phenylalanine + ATP = L-phenylalanyl-tRNA(Phe) + AMP + diphosphate + H(+). This chain is Phenylalanine--tRNA ligase beta subunit (pheT), found in Thermotoga maritima (strain ATCC 43589 / DSM 3109 / JCM 10099 / NBRC 100826 / MSB8).